Here is a 144-residue protein sequence, read N- to C-terminus: Grifin (144 aa).

One can recognise a Galectin domain in the interval 5–133 (FEAFCAGGLA…DHQLAQVELA (129 aa)). Phosphoserine is present on serine 138.

In terms of assembly, homodimer. Lens-specific. Located at the interface between lens fiber cells (at protein level).

In Rattus norvegicus (Rat), this protein is Grifin (Grifin).